We begin with the raw amino-acid sequence, 166 residues long: Small ribosomal subunit protein uS5 (166 aa).

The 64-residue stretch at Leu-11 to Val-74 folds into the S5 DRBM domain.

The protein belongs to the universal ribosomal protein uS5 family. As to quaternary structure, part of the 30S ribosomal subunit. Contacts proteins S4 and S8.

With S4 and S12 plays an important role in translational accuracy. In terms of biological role, located at the back of the 30S subunit body where it stabilizes the conformation of the head with respect to the body. The sequence is that of Small ribosomal subunit protein uS5 from Pasteurella multocida (strain Pm70).